A 293-amino-acid chain; its full sequence is Ribosomal protein L11 methyltransferase (293 aa).

S-adenosyl-L-methionine-binding residues include T145, G166, D188, and N230.

This sequence belongs to the methyltransferase superfamily. PrmA family.

The protein resides in the cytoplasm. The enzyme catalyses L-lysyl-[protein] + 3 S-adenosyl-L-methionine = N(6),N(6),N(6)-trimethyl-L-lysyl-[protein] + 3 S-adenosyl-L-homocysteine + 3 H(+). Methylates ribosomal protein L11. The sequence is that of Ribosomal protein L11 methyltransferase from Salmonella newport (strain SL254).